The chain runs to 784 residues: Replication protein A 70 kDa DNA-binding subunit E (784 aa).

The segment at 114–224 (HPVPGGKHND…NRGPVARNEA (111 aa)) is disordered. Composition is skewed to polar residues over residues 132–148 (KFNT…QVNN) and 167–190 (SSVP…NGVT). Positions 241–327 (WTIKARVTNK…RNDYEIMLDN (87 aa)) form a DNA-binding region, OB. The C4-type zinc finger occupies 532 to 558 (CPIMNGDRPCSKKVTDNGDGTWRCEKC). 2 disordered regions span residues 678–707 (LPIN…PSSV) and 746–784 (AKCP…VGSY). A compositionally biased stretch (polar residues) spans 695–707 (GIGSSGTRDPSSV). Positions 760–776 (YMGGSYRGTTGSYGGGL) are enriched in gly residues.

The protein belongs to the replication factor A protein 1 family. Heterotrimer of RPA1, RPA2 and RPA3 (canonical replication protein A complex).

Its subcellular location is the nucleus. Functionally, component of the replication protein A complex (RPA) required for DNA recombination, repair and replication. The activity of RPA is mediated by single-stranded DNA binding and protein interactions. Probably involved in repair of double-strand DNA breaks (DSBs) induced by genotoxic stresses. The sequence is that of Replication protein A 70 kDa DNA-binding subunit E (RPA1E) from Arabidopsis thaliana (Mouse-ear cress).